A 247-amino-acid polypeptide reads, in one-letter code: MNRTPLVAGNWKMNGRKDLLTEMADALAGYAGAAEVVICPPFPYLAAARSAMPGAVGIGSQNVSEQEDGAFTGEVSAPMLAEVGCGYVIIGHSERRALYGETDAQIASKFAHAQAAGLVPILCVGETLEERDSGNTDTIVCGQLRAVVDAVGVAAFANAIVAYEPVWAIGTGKTASPEQAQAVHACLRQFLAKDDPDIAQSLRLLYGGSVKADNAALLFAQSDIDGGLIGGASLTADSFIAICQAAE.

Residue 10-12 participates in substrate binding; that stretch reads NWK. Histidine 92 serves as the catalytic Electrophile. Glutamate 164 (proton acceptor) is an active-site residue. Residues glycine 170, serine 209, and 230 to 231 contribute to the substrate site; that span reads GG.

Belongs to the triosephosphate isomerase family. As to quaternary structure, homodimer.

It is found in the cytoplasm. The catalysed reaction is D-glyceraldehyde 3-phosphate = dihydroxyacetone phosphate. It functions in the pathway carbohydrate biosynthesis; gluconeogenesis. It participates in carbohydrate degradation; glycolysis; D-glyceraldehyde 3-phosphate from glycerone phosphate: step 1/1. In terms of biological role, involved in the gluconeogenesis. Catalyzes stereospecifically the conversion of dihydroxyacetone phosphate (DHAP) to D-glyceraldehyde-3-phosphate (G3P). This chain is Triosephosphate isomerase, found in Alcanivorax borkumensis (strain ATCC 700651 / DSM 11573 / NCIMB 13689 / SK2).